A 413-amino-acid polypeptide reads, in one-letter code: uncharacterized protein (413 aa).

The next 12 membrane-spanning stretches (helical) occupy residues 42 to 62 (FLGG…LPVF), 75 to 95 (LSLS…GPLS), 109 to 129 (LIAA…VIVF), 133 to 153 (LTGL…VEEV), 157 to 179 (SVSF…GRIL), 191 to 211 (IAFI…LYFL), 238 to 258 (PTLL…ITIF), 265 to 285 (LMLS…IIYL), 304 to 324 (SSIL…TQYN), 326 to 346 (IFII…SHSI), 362 to 382 (ATSL…TFGG), and 383 to 403 (FFWF…ILIF).

It belongs to the major facilitator superfamily.

The protein resides in the cell membrane. This is an uncharacterized protein from Buchnera aphidicola subsp. Schizaphis graminum (strain Sg).